The chain runs to 326 residues: Mitochondrial glycine transporter (326 aa).

Solcar repeat units follow at residues 45–134 (HPVI…SKQY), 141–225 (PTAL…TRTA), and 237–321 (LIPL…MMAR). The next 6 helical transmembrane spans lie at 51–76 (FLCG…TRLQ), 109–135 (GMSP…KQYF), 147–172 (VILG…TRYE), 200–223 (GLTA…SQTR), 241–267 (INFS…KTHM), and 296–314 (GSVP…AWTV).

Belongs to the mitochondrial carrier (TC 2.A.29) family. SLC25A38 subfamily.

Its subcellular location is the mitochondrion inner membrane. The catalysed reaction is glycine(in) = glycine(out). In terms of biological role, mitochondrial glycine transporter that imports glycine into the mitochondrial matrix. Plays an important role in providing glycine for the first enzymatic step in heme biosynthesis, the condensation of glycine with succinyl-CoA to produce 5-aminolevulinate (ALA) in the mitochondrial matrix. Required during erythropoiesis. Its function is as follows. Plays a role as pro-apoptotic protein that induces caspase-dependent apoptosis. The sequence is that of Mitochondrial glycine transporter from Mus musculus (Mouse).